The primary structure comprises 643 residues: tRNA 5-methylaminomethyl-2-thiouridine biosynthesis bifunctional protein MnmC (643 aa).

Positions 1-223 (MPDRLVSATL…VDDRLVGDYA (223 aa)) are tRNA (mnm(5)s(2)U34)-methyltransferase. The tract at residues 247-643 (IGAGLAGCAV…LRARRVGSAG (397 aa)) is FAD-dependent cmnm(5)s(2)U34 oxidoreductase.

It in the N-terminal section; belongs to the methyltransferase superfamily. tRNA (mnm(5)s(2)U34)-methyltransferase family. The protein in the C-terminal section; belongs to the DAO family. FAD is required as a cofactor.

The protein localises to the cytoplasm. The enzyme catalyses 5-aminomethyl-2-thiouridine(34) in tRNA + S-adenosyl-L-methionine = 5-methylaminomethyl-2-thiouridine(34) in tRNA + S-adenosyl-L-homocysteine + H(+). Its function is as follows. Catalyzes the last two steps in the biosynthesis of 5-methylaminomethyl-2-thiouridine (mnm(5)s(2)U) at the wobble position (U34) in tRNA. Catalyzes the FAD-dependent demodification of cmnm(5)s(2)U34 to nm(5)s(2)U34, followed by the transfer of a methyl group from S-adenosyl-L-methionine to nm(5)s(2)U34, to form mnm(5)s(2)U34. This chain is tRNA 5-methylaminomethyl-2-thiouridine biosynthesis bifunctional protein MnmC, found in Burkholderia cenocepacia (strain HI2424).